A 115-amino-acid chain; its full sequence is Large ribosomal subunit protein bL19 (115 aa).

The protein belongs to the bacterial ribosomal protein bL19 family.

Functionally, this protein is located at the 30S-50S ribosomal subunit interface and may play a role in the structure and function of the aminoacyl-tRNA binding site. The polypeptide is Large ribosomal subunit protein bL19 (Streptococcus pyogenes serotype M1).